Reading from the N-terminus, the 133-residue chain is MHVSSLKVVLFGVCCLSLAACQTPAPVKNTASRSAASVPANEQISQLASLVAASKYLRVQCERSDLPDDGTILKTAVNVAVQKGWDTGRYQSLPQLSENLYQGLLKDGTPKATQCSSFNRTMTPFLDAMRTVR.

A signal peptide spans 1–20; it reads MHVSSLKVVLFGVCCLSLAA. A lipid anchor (N-palmitoyl cysteine) is attached at C21. C21 is lipidated: S-diacylglycerol cysteine. Cysteines 61 and 115 form a disulfide.

It to K.pneumoniae PulS. Interacts with secretin OutD.

It localises to the cell outer membrane. In terms of biological role, out proteins are required for the translocation of pectate lyases and cellulases across the outer membrane. The sequence is that of Pilotin OutS (outS) from Dickeya dadantii (strain 3937) (Erwinia chrysanthemi (strain 3937)).